The sequence spans 365 residues: DNA replication and repair protein RecF (365 aa).

Residue Gly-30–Thr-37 coordinates ATP.

It belongs to the RecF family.

The protein resides in the cytoplasm. Functionally, the RecF protein is involved in DNA metabolism; it is required for DNA replication and normal SOS inducibility. RecF binds preferentially to single-stranded, linear DNA. It also seems to bind ATP. The polypeptide is DNA replication and repair protein RecF (Chlamydia trachomatis serovar L2b (strain UCH-1/proctitis)).